Reading from the N-terminus, the 590-residue chain is Sulfoacetaldehyde acetyltransferase (590 aa).

This sequence belongs to the TPP enzyme family. Mg(2+) is required as a cofactor. Requires thiamine diphosphate as cofactor.

Its subcellular location is the cytoplasm. The enzyme catalyses acetyl phosphate + sulfite + H(+) = sulfoacetaldehyde + phosphate. It functions in the pathway organosulfur degradation; taurine degradation via aerobic pathway; acetyl phosphate and sulfite from taurine: step 2/2. This chain is Sulfoacetaldehyde acetyltransferase, found in Rhodobacter capsulatus (strain ATCC BAA-309 / NBRC 16581 / SB1003).